The following is a 580-amino-acid chain: Type 3 secretion system translocon protein SctE (580 aa).

The next 2 membrane-spanning stretches (helical) occupy residues 313–333 (ILGA…GGAS) and 399–419 (IGSI…VVLV).

This sequence belongs to the SctE/SipB/YopB family. The core secretion machinery of the T3SS is composed of approximately 20 different proteins, including cytoplasmic components, a base, an export apparatus and a needle. This subunit is involved in the formation of a pore, called the translocon, in host membrane.

The protein localises to the secreted. It localises to the host membrane. Its function is as follows. Component of the type III secretion system (T3SS), also called injectisome, which is used to inject bacterial effector proteins into eukaryotic host cells. IpaB/SctE and IpaC/SctB are inserted into the host membrane where they form a pore and allow the translocation of effector proteins into the cytosol of target cells. This Shigella dysenteriae protein is Type 3 secretion system translocon protein SctE.